The primary structure comprises 316 residues: L-lactate dehydrogenase (316 aa).

NAD(+) is bound by residues V15, D37, K42, Y68, and 82-83 (GL). Residues Q85, R91, and 123 to 126 (NPVD) contribute to the substrate site. NAD(+) contacts are provided by residues 121–123 (ASN) and T146. 151–154 (DTSR) contacts substrate. The beta-D-fructose 1,6-bisphosphate site is built by R156 and H171. H178 (proton acceptor) is an active-site residue. At Y222 the chain carries Phosphotyrosine. Position 231 (T231) interacts with substrate.

Belongs to the LDH/MDH superfamily. LDH family. In terms of assembly, homotetramer.

It is found in the cytoplasm. It carries out the reaction (S)-lactate + NAD(+) = pyruvate + NADH + H(+). Its pathway is fermentation; pyruvate fermentation to lactate; (S)-lactate from pyruvate: step 1/1. Allosterically activated by fructose 1,6-bisphosphate (FBP). In terms of biological role, catalyzes the conversion of lactate to pyruvate. This is L-lactate dehydrogenase from Borrelia garinii subsp. bavariensis (strain ATCC BAA-2496 / DSM 23469 / PBi) (Borreliella bavariensis).